The primary structure comprises 99 residues: Large ribosomal subunit protein uL23 (99 aa).

Belongs to the universal ribosomal protein uL23 family. As to quaternary structure, part of the 50S ribosomal subunit. Contacts protein L29, and trigger factor when it is bound to the ribosome.

Functionally, one of the early assembly proteins it binds 23S rRNA. One of the proteins that surrounds the polypeptide exit tunnel on the outside of the ribosome. Forms the main docking site for trigger factor binding to the ribosome. The sequence is that of Large ribosomal subunit protein uL23 from Oenococcus oeni (strain ATCC BAA-331 / PSU-1).